A 557-amino-acid polypeptide reads, in one-letter code: Glucose-6-phosphate isomerase (557 aa).

Glutamate 361 (proton donor) is an active-site residue. Residues histidine 392 and lysine 520 contribute to the active site.

It belongs to the GPI family.

The protein resides in the cytoplasm. It catalyses the reaction alpha-D-glucose 6-phosphate = beta-D-fructose 6-phosphate. Its pathway is carbohydrate biosynthesis; gluconeogenesis. The protein operates within carbohydrate degradation; glycolysis; D-glyceraldehyde 3-phosphate and glycerone phosphate from D-glucose: step 2/4. Its function is as follows. Catalyzes the reversible isomerization of glucose-6-phosphate to fructose-6-phosphate. The chain is Glucose-6-phosphate isomerase from Acinetobacter baylyi (strain ATCC 33305 / BD413 / ADP1).